A 397-amino-acid polypeptide reads, in one-letter code: UPF0261 protein mlr3387 (397 aa).

The protein belongs to the UPF0261 family.

This chain is UPF0261 protein mlr3387, found in Mesorhizobium japonicum (strain LMG 29417 / CECT 9101 / MAFF 303099) (Mesorhizobium loti (strain MAFF 303099)).